The chain runs to 587 residues: MARKFGRRFRRNSRASLPSLKFLTLGSTDSVFGPHNQQHREEEANAPQEIALKPVEENVQTLLGSEGDVECRAPPQQQDYAPTWKCVAIMIALCLAVLCMALDNTILATAIPKITEEFNSVHDMGWYVSAYMLAQSSMTLVYGKLLTYYTVKWVYIAALLLFEGGSLICGVSPNSIALIIGRAISGTGGSGILVSSFLIVTIIVPVEKRPLYNGILSSLYAISGVFGPLLGGAFTDYATWRWCFYINLPVGGVTGFFILLLFRADKPTKQWPTGAVSQLLELDIIGLFLFIPALVSLLLVLQWGGSKYPWDDAHIIALIAVFGVTILAFAAVEYWQQDRATIPPSMIRNRDIWGSLLFTFCLSGSVIIFNYYLPIWFQSIKNASATMSGVMNIPLILAVALTSILSGWAVTTLGYYIPFMYATPVIASVGAGLLSTFKVSSAHPAWIGFQILYGIGVGLGFGLPLVVVQATLTAHTISSGTALVTLTQGLAGALFNFVAQSVFQTKLVQALFAEAPSLDAGKIAEAGATVVRDIVDPDMVPAVLRAYNYAITRVYLVGAALAAAALLGVVPIRWGSVKGKKIEAGAA.

9 consecutive transmembrane segments (helical) span residues 87-107, 124-146, 153-173, 184-204, 214-234, 242-262, 284-304, 315-335, and 357-377; these read VAIMIALCLAVLCMALDNTIL, MGWYVSAYMLAQSSMTLVYGKLL, WVYIAALLLFEGGSLICGVSP, ISGTGGSGILVSSFLIVTIIV, GILSSLYAISGVFGPLLGGAF, WCFYINLPVGGVTGFFILLLF, IIGLFLFIPALVSLLLVLQWG, IIALIAVFGVTILAFAAVEYW, and LFTFCLSGSVIIFNYYLPIWF. N-linked (GlcNAc...) asparagine glycosylation is present at asparagine 382. 5 consecutive transmembrane segments (helical) span residues 393–413, 414–434, 447–467, 483–503, and 554–574; these read IPLILAVALTSILSGWAVTTL, GYYIPFMYATPVIASVGAGLL, IGFQILYGIGVGLGFGLPLVV, LVTLTQGLAGALFNFVAQSVF, and VYLVGAALAAAALLGVVPIRW.

Belongs to the major facilitator superfamily. TCR/Tet family.

The protein resides in the membrane. Its function is as follows. MFS-type transporter; part of the gene cluster that mediates the biosynthesis of oxepinamides, derivatives of anthranilyl-containing tripeptides that share an oxepin ring and a fused pyrimidinone moiety. This is MFS-type transporter opaD from Aspergillus ustus.